We begin with the raw amino-acid sequence, 223 residues long: Cytotoxic T-lymphocyte protein 4 (223 aa).

The first 35 residues, 1–35 (MACSGFQSHGAWLELTSRTWPCTALFSLLFIPVFS), serve as a signal peptide directing secretion. Topologically, residues 38-161 (MHVAQPAVVL…IDPEPCPDSD (124 aa)) are extracellular. The Ig-like V-type domain occupies 39 to 140 (HVAQPAVVLA…VELLYPPPYY (102 aa)). The segment at 46–50 (VLANS) is homodimerization. 2 disulfides stabilise this stretch: C58–C129 and C85–C103. N113 carries N-linked (GlcNAc...) asparagine glycosylation. Residues 134-139 (LYPPPY) form an important for interaction with CD80 and CD86 region. N-linked (GlcNAc...) asparagine glycosylation occurs at N145. Residues 150 to 155 (YVIDPE) are homodimerization. Residues 162–182 (FLLWILAAVSSGLFFYSFLIT) traverse the membrane as a helical segment. The Cytoplasmic segment spans residues 183–223 (AVSLSKMLKKRSPLTTGVYVKMPPTEPECEKQFQPYFIPIN). Y201 carries the phosphotyrosine; by TXK and JAK2 modification.

As to quaternary structure, homodimer; disulfide-linked. Binds to CD80/B7-1 and CD86/B7.2. Interacts with ICOSLG. In terms of processing, N-glycosylation is important for dimerization. Phosphorylation at Tyr-201 prevents binding to the AP-2 adapter complex, blocks endocytosis, and leads to retention of CTLA4 on the cell surface.

The protein resides in the cell membrane. Inhibitory receptor acting as a major negative regulator of T-cell responses. The affinity of CTLA4 for its natural B7 family ligands, CD80 and CD86, is considerably stronger than the affinity of their cognate stimulatory coreceptor CD28. The polypeptide is Cytotoxic T-lymphocyte protein 4 (CTLA4) (Sus scrofa (Pig)).